A 343-amino-acid polypeptide reads, in one-letter code: Holliday junction branch migration complex subunit RuvB (343 aa).

The large ATPase domain (RuvB-L) stretch occupies residues 4–193 (TDNLTAAQPQ…FGIVSRLEFY (190 aa)). ATP is bound by residues leucine 32, arginine 33, glycine 74, lysine 77, threonine 78, threonine 79, 140–142 (EDY), arginine 183, tyrosine 193, and arginine 230. Mg(2+) is bound at residue threonine 78. The tract at residues 194–264 (ENRDLTTIVS…IADAALSMLD (71 aa)) is small ATPAse domain (RuvB-S). The tract at residues 267–343 (AQGLDVMDRK…YLHFGLPVEK (77 aa)) is head domain (RuvB-H). DNA contacts are provided by arginine 322 and arginine 327.

This sequence belongs to the RuvB family. Homohexamer. Forms an RuvA(8)-RuvB(12)-Holliday junction (HJ) complex. HJ DNA is sandwiched between 2 RuvA tetramers; dsDNA enters through RuvA and exits via RuvB. An RuvB hexamer assembles on each DNA strand where it exits the tetramer. Each RuvB hexamer is contacted by two RuvA subunits (via domain III) on 2 adjacent RuvB subunits; this complex drives branch migration. In the full resolvosome a probable DNA-RuvA(4)-RuvB(12)-RuvC(2) complex forms which resolves the HJ.

The protein resides in the cytoplasm. It carries out the reaction ATP + H2O = ADP + phosphate + H(+). Functionally, the RuvA-RuvB-RuvC complex processes Holliday junction (HJ) DNA during genetic recombination and DNA repair, while the RuvA-RuvB complex plays an important role in the rescue of blocked DNA replication forks via replication fork reversal (RFR). RuvA specifically binds to HJ cruciform DNA, conferring on it an open structure. The RuvB hexamer acts as an ATP-dependent pump, pulling dsDNA into and through the RuvAB complex. RuvB forms 2 homohexamers on either side of HJ DNA bound by 1 or 2 RuvA tetramers; 4 subunits per hexamer contact DNA at a time. Coordinated motions by a converter formed by DNA-disengaged RuvB subunits stimulates ATP hydrolysis and nucleotide exchange. Immobilization of the converter enables RuvB to convert the ATP-contained energy into a lever motion, pulling 2 nucleotides of DNA out of the RuvA tetramer per ATP hydrolyzed, thus driving DNA branch migration. The RuvB motors rotate together with the DNA substrate, which together with the progressing nucleotide cycle form the mechanistic basis for DNA recombination by continuous HJ branch migration. Branch migration allows RuvC to scan DNA until it finds its consensus sequence, where it cleaves and resolves cruciform DNA. The protein is Holliday junction branch migration complex subunit RuvB of Neisseria meningitidis serogroup C (strain 053442).